Consider the following 61-residue polypeptide: UPF0434 protein PSPTO_3844 (61 aa).

It belongs to the UPF0434 family.

The chain is UPF0434 protein PSPTO_3844 from Pseudomonas syringae pv. tomato (strain ATCC BAA-871 / DC3000).